The chain runs to 123 residues: Large ribosomal subunit protein uL14 (123 aa).

Belongs to the universal ribosomal protein uL14 family. Part of the 50S ribosomal subunit. Forms a cluster with proteins L3 and L19. In the 70S ribosome, L14 and L19 interact and together make contacts with the 16S rRNA in bridges B5 and B8.

Its function is as follows. Binds to 23S rRNA. Forms part of two intersubunit bridges in the 70S ribosome. The sequence is that of Large ribosomal subunit protein uL14 from Sodalis glossinidius (strain morsitans).